The chain runs to 105 residues: uncharacterized protein (105 aa).

Residues 8-28 (FMTAGIIIALIIAVLAPFLAS) traverse the membrane as a helical segment. The segment at 32-53 (DGLESTAEKVMPNPETEPVLES) is disordered. Residues 72–92 (VSMVIGTILVLAIAYGVGAVF) traverse the membrane as a helical segment.

The protein to M.jannaschii MJ1570.

The protein resides in the cell membrane. This is an uncharacterized protein from Methanothermobacter thermautotrophicus (strain ATCC 29096 / DSM 1053 / JCM 10044 / NBRC 100330 / Delta H) (Methanobacterium thermoautotrophicum).